The primary structure comprises 838 residues: MEDQHSAASELGSSAAPTLPPPPPPPPPPTSPPPSLQQRQQEPTETDDAEDTCSSSSSSSASSECFVSPLEDTSSEDSADTVLPSEPRRDEEEQEEDSPDRYMDADVLQRHLLRQSTILRQVLQEAAPGAAAEAAEAPSVAELSRRLEAALFSPATPPRRQENGTCAPDPRLNFYPVFMLPEALATYLLFFHNQKIPVSCRANRPRADAHWRLPSGTPLPDYPTTDEVYKIFEGLGDEEPACANQDLKERDSVLVELKLDNPRLAVVKQCIAVTHFAYPALALPPKVMSTLMQTLLVRRASPLPDEGETPLEDLLVVSDEQLARWMHTSDPKVLEERRKTVTAACMVTVQLHCMHTFLTSREMVRRLGECLHYMFRQGYVKLASKIANMELSNLVSYLGMLHENRLGQHVLHHTLKHEARRDYVRDTIYLYLVYTWQTAMGVWQQCLEDRNLRALETSLARARQSLWTGFDERTIAQDLAAFLFPTKLVETLQRSLPDFASQSMMHAFRSFVLERSGILPAVCNALPSDFVPTVYRECPPPLWAHCYLLRLANFLMYHCDLAEDTSGEGLFECYCRCNLCAPHRCLATNTALLNEVQAINTFELQRPPKPDGTLPPPFKLTPGLWTSAFLRHFVSEDYHSDRILFYEDVSRPPRVEPSACVITHSAILAQLHDIKKAREEFLLTKGHGVYLDPHTGEELNTAAPSTAHHAAPPEEAHPQQHQHQQQPSHRRRHHRSSYADRVRSELHAYGGATGSSRDPVSGGCSARGTHSRDAARRRGSQQRDQRQLRRQFAQYPRGTGGGGGTGHTDEAIQALLHQQQQQQEHQPAQELRRPQRGS.

The segment at 1–102 (MEDQHSAASE…EQEEDSPDRY (102 aa)) is disordered. Residues 18–35 (TLPPPPPPPPPPTSPPPS) show a composition bias toward pro residues. Low complexity predominate over residues 52–65 (TCSSSSSSSASSEC). Positions 291-353 (LMQTLLVRRA…ACMVTVQLHC (63 aa)) are binding to host EIF4G. In terms of domain architecture, RRM spans 356–474 (TFLTSREMVR…SLWTGFDERT (119 aa)). A phosphotyrosine; by host mark is found at tyrosine 373 and tyrosine 690. The segment at 693 to 838 (PHTGEELNTA…QELRRPQRGS (146 aa)) is disordered. Residues 701–710 (TAAPSTAHHA) show a composition bias toward low complexity. Basic and acidic residues-rich tracts occupy residues 737-746 (SYADRVRSEL) and 770-787 (HSRDAARRRGSQQRDQRQ). Over residues 813–829 (QALLHQQQQQQEHQPAQ) the composition is skewed to low complexity.

Belongs to the adenoviridae shutoff protein family. Monomer. Interacts with hexon protein; this interaction allows chaperoning and trimerization of hexon proteins. Interacts (via N-terminus) with host initiation factor EIF4G (via C-terminus). Interacts (via RRM domain) with viral mRNAs that contain the tripartite leader; this interaction allows ribosome shunting and expression of viral late mRNAs. Might be cleaved by the viral protease. In terms of processing, phosphorylated. Tyrosine phosphorylation enhances preferential binding to tripartite leader mRNAs and allows ribosome shunting. Post-translationally, methylated. Asymmetric dimethylation by host PRMT1 of the Arg/Gly-rich region may regulate shutoff protein binding to hexon and promote the capsid assembly in the nucleus.

It is found in the host cytoplasm. Its function is as follows. Protein that inhibits host translation while promoting late viral translation by ribosome shunting. Blocks host cap-dependent translation by binding to eIF4G, displacing MKNK1 from cap initiation complexes and preventing EIF4E phosphorylation. Binds to the tripartite leader sequence of viral late mRNAs and recruits host eIF4G, PABPC1/poly-A binding protein and 40S ribosomes subunits on viral mRNAs, allowing ribosome shunting and efficient translation of late viral mRNAs even though conventional translation via ribosome scanning from the cap has been shut off in the host cell. During assembly, acts as a chaperone protein that helps hexon proteins assembly into trimers. In Porcine adenovirus A serotype 3 (PAdV-3), this protein is Shutoff protein.